A 186-amino-acid chain; its full sequence is ATP synthase subunit delta (186 aa).

This sequence belongs to the ATPase delta chain family. F-type ATPases have 2 components, F(1) - the catalytic core - and F(0) - the membrane proton channel. F(1) has five subunits: alpha(3), beta(3), gamma(1), delta(1), epsilon(1). F(0) has three main subunits: a(1), b(2) and c(10-14). The alpha and beta chains form an alternating ring which encloses part of the gamma chain. F(1) is attached to F(0) by a central stalk formed by the gamma and epsilon chains, while a peripheral stalk is formed by the delta and b chains.

The protein resides in the cell inner membrane. Functionally, f(1)F(0) ATP synthase produces ATP from ADP in the presence of a proton or sodium gradient. F-type ATPases consist of two structural domains, F(1) containing the extramembraneous catalytic core and F(0) containing the membrane proton channel, linked together by a central stalk and a peripheral stalk. During catalysis, ATP synthesis in the catalytic domain of F(1) is coupled via a rotary mechanism of the central stalk subunits to proton translocation. This protein is part of the stalk that links CF(0) to CF(1). It either transmits conformational changes from CF(0) to CF(1) or is implicated in proton conduction. This is ATP synthase subunit delta from Mesorhizobium japonicum (strain LMG 29417 / CECT 9101 / MAFF 303099) (Mesorhizobium loti (strain MAFF 303099)).